We begin with the raw amino-acid sequence, 316 residues long: Ribose-phosphate pyrophosphokinase (316 aa).

ATP contacts are provided by residues 37 to 39 (DGE) and 96 to 97 (RQ). Mg(2+) is bound by residues His131 and Asp171. Lys195 is a catalytic residue. Residues Arg197, Asp221, and 225–229 (DTGGT) contribute to the D-ribose 5-phosphate site.

The protein belongs to the ribose-phosphate pyrophosphokinase family. Class I subfamily. As to quaternary structure, homohexamer. Mg(2+) serves as cofactor.

The protein localises to the cytoplasm. The enzyme catalyses D-ribose 5-phosphate + ATP = 5-phospho-alpha-D-ribose 1-diphosphate + AMP + H(+). Its pathway is metabolic intermediate biosynthesis; 5-phospho-alpha-D-ribose 1-diphosphate biosynthesis; 5-phospho-alpha-D-ribose 1-diphosphate from D-ribose 5-phosphate (route I): step 1/1. In terms of biological role, involved in the biosynthesis of the central metabolite phospho-alpha-D-ribosyl-1-pyrophosphate (PRPP) via the transfer of pyrophosphoryl group from ATP to 1-hydroxyl of ribose-5-phosphate (Rib-5-P). This is Ribose-phosphate pyrophosphokinase from Haemophilus ducreyi (strain 35000HP / ATCC 700724).